The sequence spans 95 residues: Small ribosomal subunit protein bS16 (95 aa).

This sequence belongs to the bacterial ribosomal protein bS16 family.

This chain is Small ribosomal subunit protein bS16, found in Thermotoga maritima (strain ATCC 43589 / DSM 3109 / JCM 10099 / NBRC 100826 / MSB8).